Here is a 205-residue protein sequence, read N- to C-terminus: Large ribosomal subunit protein bL25 (205 aa).

Residues Phe-178–Glu-205 form a disordered region. Over residues Glu-182–Glu-197 the composition is skewed to acidic residues.

The protein belongs to the bacterial ribosomal protein bL25 family. CTC subfamily. Part of the 50S ribosomal subunit; part of the 5S rRNA/L5/L18/L25 subcomplex. Contacts the 5S rRNA. Binds to the 5S rRNA independently of L5 and L18.

Functionally, this is one of the proteins that binds to the 5S RNA in the ribosome where it forms part of the central protuberance. The sequence is that of Large ribosomal subunit protein bL25 from Cutibacterium acnes (strain DSM 16379 / KPA171202) (Propionibacterium acnes).